The sequence spans 499 residues: Uridine-cytidine kinase A (499 aa).

Residues 1 to 44 (MSDNSTTKVTTNDSPSLTTTTSTTTAPTTTTTTTTTPTHNHDTT) form a disordered region. Low complexity predominate over residues 10–38 (TTNDSPSLTTTTSTTTAPTTTTTTTTTPT). Residue 78-85 (GGSASGKT) participates in ATP binding.

It belongs to the uridine kinase family.

The enzyme catalyses uridine + ATP = UMP + ADP + H(+). It carries out the reaction cytidine + ATP = CMP + ADP + H(+). It participates in pyrimidine metabolism; CTP biosynthesis via salvage pathway; CTP from cytidine: step 1/3. It functions in the pathway pyrimidine metabolism; UMP biosynthesis via salvage pathway; UMP from uridine: step 1/1. Its function is as follows. Catalyzes the conversion of uridine into uridine monophosphate and cytidine into cytidine monophosphate in the pyrimidine salvage pathway. The protein is Uridine-cytidine kinase A (udkA) of Dictyostelium discoideum (Social amoeba).